We begin with the raw amino-acid sequence, 377 residues long: Chaperone protein DnaJ (377 aa).

Residues 4–69 (DYYEALGVTR…QKRAAYDRFG (66 aa)) form the J domain. Residues 135–213 (GKTAQIRVPT…CHGQGRVTQE (79 aa)) form a CR-type zinc finger. Residues Cys-148, Cys-151, Cys-165, Cys-168, Cys-187, Cys-190, Cys-201, and Cys-204 each coordinate Zn(2+). 4 CXXCXGXG motif repeats span residues 148–155 (CDECSGSG), 165–172 (CTMCSGSG), 187–194 (CPGCNGRG), and 201–208 (CEKCHGQG).

The protein belongs to the DnaJ family. Homodimer. The cofactor is Zn(2+).

Its subcellular location is the cytoplasm. Participates actively in the response to hyperosmotic and heat shock by preventing the aggregation of stress-denatured proteins and by disaggregating proteins, also in an autonomous, DnaK-independent fashion. Unfolded proteins bind initially to DnaJ; upon interaction with the DnaJ-bound protein, DnaK hydrolyzes its bound ATP, resulting in the formation of a stable complex. GrpE releases ADP from DnaK; ATP binding to DnaK triggers the release of the substrate protein, thus completing the reaction cycle. Several rounds of ATP-dependent interactions between DnaJ, DnaK and GrpE are required for fully efficient folding. Also involved, together with DnaK and GrpE, in the DNA replication of plasmids through activation of initiation proteins. This chain is Chaperone protein DnaJ, found in Brucella canis (strain ATCC 23365 / NCTC 10854 / RM-666).